A 187-amino-acid chain; its full sequence is Elongation factor P (187 aa).

Belongs to the elongation factor P family.

It localises to the cytoplasm. It functions in the pathway protein biosynthesis; polypeptide chain elongation. Its function is as follows. Involved in peptide bond synthesis. Stimulates efficient translation and peptide-bond synthesis on native or reconstituted 70S ribosomes in vitro. Probably functions indirectly by altering the affinity of the ribosome for aminoacyl-tRNA, thus increasing their reactivity as acceptors for peptidyl transferase. In Corynebacterium jeikeium (strain K411), this protein is Elongation factor P.